The primary structure comprises 256 residues: NifU-like protein, mitochondrial (256 aa).

Residues 196–199 (CTSC) carry the CxxC motif motif.

It belongs to the NifU family. As to quaternary structure, homodimer; in absence of BOL3, probably bridged by an iron-sulfure cluster. Interacts with BOL3. Interacts with apo-target proteins, such as ACO1, LYS4, ACO2 and SDH2.

The protein localises to the mitochondrion matrix. Its function is as follows. Involved in iron homeostasis within the mitochondrion where it is involved in the assembly of iron-sulfur proteins. Together with BOL3, required during the last step of iron-sulfur protein assembly when the iron-sulfur cluster is inserted into the target protein. Required for protecting iron sulfur clusters from oxidative damage. The chain is NifU-like protein, mitochondrial (NFU1) from Saccharomyces cerevisiae (strain ATCC 204508 / S288c) (Baker's yeast).